Consider the following 302-residue polypeptide: Methionyl-tRNA formyltransferase (302 aa).

Residue 109-112 (SILP) coordinates (6S)-5,6,7,8-tetrahydrofolate.

It belongs to the Fmt family.

It carries out the reaction L-methionyl-tRNA(fMet) + (6R)-10-formyltetrahydrofolate = N-formyl-L-methionyl-tRNA(fMet) + (6S)-5,6,7,8-tetrahydrofolate + H(+). Functionally, attaches a formyl group to the free amino group of methionyl-tRNA(fMet). The formyl group appears to play a dual role in the initiator identity of N-formylmethionyl-tRNA by promoting its recognition by IF2 and preventing the misappropriation of this tRNA by the elongation apparatus. The chain is Methionyl-tRNA formyltransferase from Campylobacter hominis (strain ATCC BAA-381 / DSM 21671 / CCUG 45161 / LMG 19568 / NCTC 13146 / CH001A).